Consider the following 271-residue polypeptide: L-aspartate dehydrogenase (271 aa).

2 residues coordinate NAD(+): Ala-124 and Asn-192. The active site involves His-222.

This sequence belongs to the L-aspartate dehydrogenase family.

The enzyme catalyses L-aspartate + NADP(+) + H2O = oxaloacetate + NH4(+) + NADPH + H(+). It carries out the reaction L-aspartate + NAD(+) + H2O = oxaloacetate + NH4(+) + NADH + H(+). It participates in cofactor biosynthesis; NAD(+) biosynthesis; iminoaspartate from L-aspartate (dehydrogenase route): step 1/1. Functionally, specifically catalyzes the NAD or NADP-dependent dehydrogenation of L-aspartate to iminoaspartate. The protein is L-aspartate dehydrogenase of Methanosarcina mazei (strain ATCC BAA-159 / DSM 3647 / Goe1 / Go1 / JCM 11833 / OCM 88) (Methanosarcina frisia).